We begin with the raw amino-acid sequence, 177 residues long: Adenine phosphoribosyltransferase (177 aa).

The protein belongs to the purine/pyrimidine phosphoribosyltransferase family. As to quaternary structure, homodimer.

Its subcellular location is the cytoplasm. It catalyses the reaction AMP + diphosphate = 5-phospho-alpha-D-ribose 1-diphosphate + adenine. The protein operates within purine metabolism; AMP biosynthesis via salvage pathway; AMP from adenine: step 1/1. Catalyzes a salvage reaction resulting in the formation of AMP, that is energically less costly than de novo synthesis. In Mycoplasma pneumoniae (strain ATCC 29342 / M129 / Subtype 1) (Mycoplasmoides pneumoniae), this protein is Adenine phosphoribosyltransferase.